The primary structure comprises 672 residues: Outer dynein arm-docking complex subunit 4 (672 aa).

8 TPR repeats span residues 13–46 (FPSY…QDGD), 48–80 (NCLV…DPAF), 81–114 (CKGI…RPDR), 275–311 (LKSL…NKEE), 320–353 (GNLY…AKEY), 360–393 (SRAL…AKTT), 397–430 (TWLF…AEEE), and 437–470 (LNAS…AKLV). Over residues 527 to 544 (RVRDEPEKVVKQWDHSED) the composition is skewed to basic and acidic residues. The interval 527–672 (RVRDEPEKVV…TGNEMEKEYE (146 aa)) is disordered. Residues 545–555 (EKETDEDDEAF) show a composition bias toward acidic residues. 2 stretches are compositionally biased toward basic and acidic residues: residues 595–650 (ETGR…EELG) and 658–672 (GETK…KEYE).

In terms of assembly, component of the outer dynein arm-docking complex along with ODAD1, ODAD2 and ODAD3. Interacts with ODAD1; this interaction may facilitate the recruitment and/or attachment of outer dynein arm docking complex proteins, including ODAD1, ODAD3 and ODAD2, to ciliary axonemes. Interacts with components of the IFT complex A, including IFT140, TTC21B/IFT139 and WDR19/IFT144, and the IFT complex B, including IFT46, IFT52 and IFT57. Interacts with CFAP53. In terms of tissue distribution, expressed in the nasal mucosa (at protein level).

It is found in the cytoplasm. The protein localises to the cytoskeleton. Its subcellular location is the cilium axoneme. Its function is as follows. Component of the outer dynein arm-docking complex (ODA-DC) that mediates outer dynein arms (ODA) binding onto the doublet microtubule. Plays an essential role for the assembly of ODA-DC and for the docking of ODA in ciliary axoneme. In Homo sapiens (Human), this protein is Outer dynein arm-docking complex subunit 4.